A 1347-amino-acid polypeptide reads, in one-letter code: BTB/POZ domain-containing protein 1 (1347 aa).

ANK repeat units follow at residues 51-81 (YGRTVLHIAVSENKNSFVRSLLQHKGIDVFV) and 86-115 (SGYTALHRAIYVGNLEAASLLLSKDPSFRS). RCC1 repeat units lie at residues 148–198 (GNEL…DKIL), 215–264 (SQNV…ALTK), 265–322 (FGSI…AWTD), and 324–372 (DIYS…CLLQ). BTB domains are found at residues 619–698 (SDVT…LSPW) and 758–829 (MDTV…VELF). 4 disordered regions span residues 1006-1029 (SSNQSDSLNKEDAEEKSPKPNVVN), 1104-1139 (EKADASTTTVLSDSRFMKAPTKKSQREKKKELSKQV), 1193-1237 (EGSS…PLSI), and 1286-1347 (GILK…RAVK). Positions 1013-1023 (LNKEDAEEKSP) are enriched in basic and acidic residues. Composition is skewed to polar residues over residues 1208–1237 (SNGSPTSWNLLTKPSPRSASLPKNSQPLSI) and 1297–1306 (NRKQGQASKQ). The segment covering 1336 to 1347 (TTHKKGKARAVK) has biased composition (basic residues).

Interacts with cul3.

It participates in protein modification; protein ubiquitination. In terms of biological role, probable substrate-specific adapter of an E3 ubiquitin-protein ligase complex which mediates the ubiquitination and subsequent proteasomal degradation of target proteins. This is BTB/POZ domain-containing protein 1 (btb1) from Schizosaccharomyces pombe (strain 972 / ATCC 24843) (Fission yeast).